The chain runs to 639 residues: UvrABC system protein C (639 aa).

Residues 1-16 (MTDLPVDEPDRDDGAD) are compositionally biased toward acidic residues. A disordered region spans residues 1–28 (MTDLPVDEPDRDDGADQPDAGADPATPR). Residues 17-27 (QPDAGADPATP) are compositionally biased toward low complexity. Positions 42–120 (SSPGVYRMID…IKKLKPRYNI (79 aa)) constitute a GIY-YIG domain. The region spanning 230–265 (KALQHDLAKRMDEAAQALDYEQAAIFRDRIKALTNV) is the UVR domain.

The protein belongs to the UvrC family. Interacts with UvrB in an incision complex.

The protein resides in the cytoplasm. In terms of biological role, the UvrABC repair system catalyzes the recognition and processing of DNA lesions. UvrC both incises the 5' and 3' sides of the lesion. The N-terminal half is responsible for the 3' incision and the C-terminal half is responsible for the 5' incision. The sequence is that of UvrABC system protein C from Rhodospirillum rubrum (strain ATCC 11170 / ATH 1.1.1 / DSM 467 / LMG 4362 / NCIMB 8255 / S1).